A 275-amino-acid chain; its full sequence is Hemin import ATP-binding protein HmuV (275 aa).

Residues L2 to Q242 enclose the ABC transporter domain. Residue G34–S41 coordinates ATP.

The protein belongs to the ABC transporter superfamily. Heme (hemin) importer (TC 3.A.1.14.5) family. The complex is composed of two ATP-binding proteins (HmuV), two transmembrane proteins (HmuU) and a solute-binding protein (HmuT).

It localises to the cell inner membrane. In terms of biological role, part of the ABC transporter complex HmuTUV involved in hemin import. Responsible for energy coupling to the transport system. The polypeptide is Hemin import ATP-binding protein HmuV (Gloeobacter violaceus (strain ATCC 29082 / PCC 7421)).